The sequence spans 276 residues: RNA-binding protein pno-1 (276 aa).

Disordered stretches follow at residues 1-30 (MATSSSAFDDEFPMEEGMPELLDDEDVPST) and 62-101 (DVVMEDISQPDDSTTDSPDADAEQKPTKRSKGSKGESRVV). A compositionally biased stretch (acidic residues) spans 8 to 27 (FDDEFPMEEGMPELLDDEDV). A KH domain is found at 197–249 (GDHVSRAIGRIAGKDGRTKLVIENTTKTRIVVANTKIHILGAYQNLKLARNAV).

It belongs to the PNO1 family. In terms of assembly, part of the small subunit (SSU) processome, composed of more than 70 proteins and the RNA chaperone small nucleolar RNA (snoRNA) U3.

Its subcellular location is the nucleus. The protein resides in the nucleolus. Its function is as follows. Part of the small subunit (SSU) processome, first precursor of the small eukaryotic ribosomal subunit. During the assembly of the SSU processome in the nucleolus, many ribosome biogenesis factors, an RNA chaperone and ribosomal proteins associate with the nascent pre-rRNA and work in concert to generate RNA folding, modifications, rearrangements and cleavage as well as targeted degradation of pre-ribosomal RNA by the RNA exosome. Positively regulates dimethylation of two adjacent adenosines in the loop of a conserved hairpin near the 3'-end of 18S rRNA. The chain is RNA-binding protein pno-1 from Caenorhabditis briggsae.